The sequence spans 426 residues: Histone-binding protein RBBP7 (426 aa).

Ala2 is subject to N-acetylalanine. The residue at position 3 (Ser3) is a Phosphoserine. The residue at position 4 (Lys4) is an N6-acetyllysine; alternate. Lys4 is covalently cross-linked (Glycyl lysine isopeptide (Lys-Gly) (interchain with G-Cter in SUMO2); alternate). Lys4 participates in a covalent cross-link: Glycyl lysine isopeptide (Lys-Gly) (interchain with G-Cter in ubiquitin); alternate. A Phosphothreonine modification is found at Thr10. 7 WD repeats span residues 47-122 (QWLP…KINH), 128-173 (RARY…LRLR), 181-217 (GLSWNSNLSGHLLSASDDHTVCLWDINAGPKEGKIVD), 228-269 (VVED…HLVD), 275-312 (VNCLSFNPYSEFILATGSADKTVALWDLRNLKLKLHTF), 318-370 (EIFQ…LFIH), and 377-404 (ISDFSWNPNEPWVICSVSEDNIMQIWQM). Ser95 carries the phosphoserine modification. Residue Lys101 forms a Glycyl lysine isopeptide (Lys-Gly) (interchain with G-Cter in SUMO2) linkage. Position 119 is an N6-acetyllysine (Lys119). Lys155 participates in a covalent cross-link: Glycyl lysine isopeptide (Lys-Gly) (interchain with G-Cter in SUMO2). The residue at position 159 (Lys159) is an N6-acetyllysine; alternate. A Glycyl lysine isopeptide (Lys-Gly) (interchain with G-Cter in SUMO2); alternate cross-link involves residue Lys159. Ser355 carries the phosphoserine modification.

The protein belongs to the WD repeat RBAP46/RBAP48/MSI1 family. As to quaternary structure, binds directly to helix 1 of the histone fold of histone H4, a region that is not accessible when H4 is in chromatin. Subunit of the type B histone acetyltransferase (HAT) complex, composed of RBBP7 and HAT1. Subunit of the core histone deacetylase (HDAC) complex, which is composed of HDAC1, HDAC2, RBBP4 and RBBP7. The core HDAC complex associates with SIN3A, ARID4B/SAP180, SAP18, SAP30, SAP130, SUDS3/SAP45 and possibly ARID4A/RBP1 and ING1 to form the SIN3 HDAC complex. Component of the nucleosome remodeling and deacetylase (NuRD) repressor complex, composed of core proteins MTA1, MTA2, MTA3, RBBP4, RBBP7, HDAC1, HDAC2, MBD2, MBD3, and peripherally associated proteins CDK2AP1, CDK2AP2, GATAD2A, GATAD2B, CHD3, CHD4 and CHD5. The exact stoichiometry of the NuRD complex is unknown, and some subunits such as MBD2 and MBD3, GATAD2A and GATAD2B, and CHD3, CHD4 and CHD5 define mutually exclusive NuRD complexes. The NuRD complex may interact with MBD3L1. The NuRD complex may interact with MBD3L2. Subunit of the PRC2/EED-EZH2 complex, which is composed of at least EED, EZH2, RBBP4, RBBP7 and SUZ12. The PRC2/EED-EZH2 complex may also associate with HDAC1. Component of the NURF-1 ISWI chromatin remodeling complex (also called the nucleosome-remodeling factor (NURF) complex) at least composed of SMARCA1, BPTF, RBBP4 and RBBP7. Within the complex interacts with SMARCA1. Component of the BPFT-SMARCA1 complex at least composed of SMARCA1, BPFT, RBBP4 and RBBP7; the complex is catalytically inactive and does not remodel chromatin. Within the complex interacts with SMARCA1. Interacts with BRCA1. Interacts with CDK2AP1. Interacts with CENPA. Interacts with CHD3. Interacts with CHD4. Interacts with CREBBP, and this interaction may be enhanced by the binding of phosphorylated CREB1 to CREBBP. Interacts with HDAC7. Interacts with MTA1. Interacts with PWWP2B. Interacts with RB1 (via viral protein-binding domain). Interacts with SUV39H1.

The protein localises to the nucleus. Its function is as follows. Core histone-binding subunit that may target chromatin remodeling factors, histone acetyltransferases and histone deacetylases to their histone substrates in a manner that is regulated by nucleosomal DNA. Component of several complexes which regulate chromatin metabolism. These include the type B histone acetyltransferase (HAT) complex, which is required for chromatin assembly following DNA replication; the core histone deacetylase (HDAC) complex, which promotes histone deacetylation and consequent transcriptional repression; the nucleosome remodeling and histone deacetylase complex (the NuRD complex), which promotes transcriptional repression by histone deacetylation and nucleosome remodeling; and the PRC2/EED-EZH2 complex, which promotes repression of homeotic genes during development; and the NURF (nucleosome remodeling factor) complex. This chain is Histone-binding protein RBBP7 (RBBP7), found in Pongo abelii (Sumatran orangutan).